The chain runs to 1453 residues: Collagen alpha-1(I) chain (1453 aa).

Residues 1 to 22 (MFSFVDLRLLLLLGATALLTHG) form the signal peptide. A propeptide spans 23 to 151 (QEDIPEVSCI…PPGLGGNFAS (129 aa)) (N-terminal propeptide). Residues 29-87 (VSCIHNGLRVPNGETWKPDVCLICICHNGTAVCDGVLCKEDLDCPNPQKREGECCPFCP) form the VWFC domain. Asn-56 is a glycosylation site (N-linked (GlcNAc...) asparagine). The tract at residues 97-1206 (VIGVEGPKGD…KSQDGGRYYR (1110 aa)) is disordered. Composition is skewed to pro residues over residues 109-118 (PQGPRGPVGP) and 128-143 (PGLP…PGPP). Gln-152 carries the pyrrolidone carboxylic acid modification. Residues 152–167 (QMSYGYDEKSAGVSVP) form a nonhelical region (N-terminal) region. Lys-160 is modified (allysine). The residue at position 161 (Ser-161) is a Phosphoserine. Residues 168–1181 (GPMGPSGPRG…PGPPGPPGPP (1014 aa)) form a triple-helical region region. A 4-hydroxyproline mark is found at Pro-179, Pro-182, Pro-185, Pro-194, Pro-197, Pro-200, Pro-215, Pro-230, Pro-236, Pro-245, and Pro-251. Positions 187-206 (PQGFQGPPGEPGEPGASGPM) are enriched in low complexity. Basic and acidic residues predominate over residues 218–232 (NGDDGEAGKPGRPGE). The residue at position 254 (Lys-254) is a 5-hydroxylysine; alternate. A glycan (O-linked (Gal...) hydroxylysine; alternate) is linked at Lys-254. The residue at position 260 (Ser-260) is a Phosphoserine. Residues Pro-278, Pro-281, Pro-287, Pro-296, and Pro-302 each carry the 4-hydroxyproline modification. A compositionally biased stretch (low complexity) spans 307-320 (SAGARGNDGAVGAA). Pro residues predominate over residues 322–334 (PPGPTGPTGPPGF). 4-hydroxyproline is present on residues Pro-323, Pro-332, Pro-335, Pro-362, Pro-365, Pro-377, Pro-383, Pro-392, Pro-398, Pro-401, and Pro-416. Residues 335–361 (PGAAGAKGEAGPQGARGSEGPQGVRGE) are compositionally biased toward low complexity. The span at 368-418 (AGAAGPAGNPGADGQPGAKGANGAPGIAGAPGFPGARGPSGPQGPSGAPGP) shows a compositional bias: low complexity. At Lys-419 the chain carries 5-hydroxylysine. 4-hydroxyproline occurs at positions 425, 428, 440, 449, 464, 470, 479, and 485. The segment covering 474-483 (GERGGPGSRG) has biased composition (gly residues). Residue Lys-494 is modified to 5-hydroxylysine. 4-hydroxyproline occurs at positions 503, 512, 518, 524, 533, 536, 545, 554, 560, 572, 581, 590, 593, 611, 629, 635, 641, 647, 653, 659, 671, 680, 692, 704, 707, 713, 719, and 728. Residues 527-566 (KGLTGSPGSPGPDGKTGPPGPAGQDGRPGPAGPPGARGQA) show a composition bias toward low complexity. Over residues 623–650 (QGPAGSPGFQGLPGPAGPPGEAGKPGEQ) the composition is skewed to low complexity. Composition is skewed to low complexity over residues 685-695 (PRGNNGAPGND) and 703-716 (APGA…PGLQ). The Cell attachment site signature appears at 734–736 (RGD). Lys-740 is subject to 5-hydroxylysine. 4-hydroxyproline occurs at positions 746, 761, and 767. Residues 773–787 (TGPSGPAGPTGARGA) are compositionally biased toward low complexity. Ser-776 bears the Phosphoserine mark. Residues Pro-788, Pro-794, Pro-797, Pro-806, Pro-812, Pro-830, Pro-839, and Pro-848 each carry the 4-hydroxyproline modification. The span at 800–815 (AGFAGPPGADGQPGAK) shows a compositional bias: low complexity. Residues 829-841 (PPGPAGPAGPPGP) are compositionally biased toward pro residues. Low complexity predominate over residues 842-872 (IGNVGAPGPKGSRGAAGPPGATGFPGAAGRV). Lys-851 bears the 5-hydroxylysine mark. Residues Pro-860 and Pro-866 each carry the 4-hydroxyproline modification. Residue Pro-874 is modified to 3-hydroxyproline. 16 positions are modified to 4-hydroxyproline: Pro-875, Pro-884, Pro-887, Pro-908, Pro-917, Pro-926, Pro-935, Pro-953, Pro-962, Pro-965, Pro-971, Pro-986, Pro-992, Pro-998, Pro-1007, and Pro-1013. The span at 901–910 (ETGPAGRPGE) shows a compositional bias: low complexity. Residues 920 to 935 (AGEKGSPGADGPAGSP) show a composition bias toward low complexity. The segment covering 985–995 (PPGPMGPPGLA) has biased composition (pro residues). The span at 997-1012 (PPGESGREGSPGAEGS) shows a compositional bias: low complexity. The residue at position 1022 (Lys-1022) is a 5-hydroxylysine. Over residues 1031 to 1046 (AGPPGAPGAPGAPGPV) the composition is skewed to pro residues. Residues Pro-1034, Pro-1037, and Pro-1040 each carry the 4-hydroxyproline modification. A compositionally biased stretch (low complexity) spans 1067–1081 (IGPAGARGPAGPQGP). The Cell attachment site signature appears at 1082 to 1084 (RGD). Positions 1082-1096 (RGDKGETGEQGDRGI) are enriched in basic and acidic residues. At Lys-1085 the chain carries 5-hydroxylysine. Position 1097 is a 5-hydroxylysine; alternate (Lys-1097). Lys-1097 is a glycosylation site (O-linked (Gal...) hydroxylysine; alternate). Positions 1102 to 1148 (FSGLQGPPGSPGSPGEQGPSGASGPAGPRGPPGSAGSPGKDGLNGLP) are enriched in low complexity. Pro-1109, Pro-1112, Pro-1115, Pro-1133, and Pro-1148 each carry 4-hydroxyproline. The residue at position 1153 (Pro-1153) is a 3-hydroxyproline. Pro-1154 is subject to 4-hydroxyproline. Residues 1166–1181 (AGPPGPPGPPGPPGPP) are compositionally biased toward pro residues. Pro-1168 bears the 3-hydroxyproline mark. A 4-hydroxyproline modification is found at Pro-1169. Pro-1171 is subject to 3-hydroxyproline. Pro-1172 carries the post-translational modification 4-hydroxyproline. Pro-1174 bears the 3-hydroxyproline mark. 3 positions are modified to 4-hydroxyproline: Pro-1175, Pro-1178, and Pro-1181. Residues 1176-1186 (GPPGPPSGGYD) are major antigenic determinant (of neutral salt-extracted rat skin collagen). The interval 1182–1207 (SGGYDFSFLPQPPQEKSQDGGRYYRA) is nonhelical region (C-terminal). The residue at position 1197 (Lys-1197) is an Allysine. Residues 1197-1206 (KSQDGGRYYR) show a composition bias toward basic and acidic residues. Residues 1208–1453 (DDANVVRDRD…GMDIGPACFV (246 aa)) constitute a propeptide, C-terminal propeptide. In terms of domain architecture, Fibrillar collagen NC1 spans 1218–1453 (LEVDTTLKSL…GMDIGPACFV (236 aa)). 3 disulfides stabilise this stretch: Cys-1248–Cys-1280, Cys-1288–Cys-1451, and Cys-1359–Cys-1404. Residues Asp-1266, Asn-1268, Gln-1269, Cys-1271, and Asp-1274 each coordinate Ca(2+). N-linked (GlcNAc...) asparagine glycosylation occurs at Asn-1354.

The protein belongs to the fibrillar collagen family. As to quaternary structure, trimers of one alpha 2(I) and two alpha 1(I) chains. Interacts with MRC2. Interacts with TRAM2. Interacts with MFAP4 in a Ca (2+)-dependent manner. Post-translationally, contains mostly 4-hydroxyproline. Proline residues at the third position of the tripeptide repeating unit (G-X-Y) are hydroxylated in some or all of the chains. In terms of processing, contains 3-hydroxyproline at a few sites. This modification occurs on the first proline residue in the sequence motif Gly-Pro-Hyp, where Hyp is 4-hydroxyproline. Lysine residues at the third position of the tripeptide repeating unit (G-X-Y) are 5-hydroxylated in some or all of the chains. Post-translationally, O-glycosylated on hydroxylated lysine residues. The O-linked glycan consists of a Glc-Gal disaccharide. Forms the fibrils of tendon, ligaments and bones. In bones the fibrils are mineralized with calcium hydroxyapatite.

Its subcellular location is the secreted. It is found in the extracellular space. The protein localises to the extracellular matrix. In terms of biological role, type I collagen is a member of group I collagen (fibrillar forming collagen). The sequence is that of Collagen alpha-1(I) chain (Col1a1) from Rattus norvegicus (Rat).